Reading from the N-terminus, the 322-residue chain is Corticotropin-releasing factor-binding protein (322 aa).

The N-terminal stretch at 1-24 is a signal peptide; that stretch reads MSPNFKLQCHFILIFLTALRGESR. 5 disulfides stabilise this stretch: cysteine 60/cysteine 81, cysteine 104/cysteine 141, cysteine 183/cysteine 205, cysteine 237/cysteine 264, and cysteine 277/cysteine 318. An N-linked (GlcNAc...) asparagine glycan is attached at asparagine 204.

Belongs to the CRF-binding protein family.

Its subcellular location is the secreted. In terms of biological role, binds CRF and inactivates it. May prevent inappropriate pituitary-adrenal stimulation in pregnancy. This chain is Corticotropin-releasing factor-binding protein (CRHBP), found in Homo sapiens (Human).